The sequence spans 116 residues: Ferredoxin-thioredoxin reductase, catalytic chain (116 aa).

Residue Cys57 participates in [4Fe-4S] cluster binding. Cys59 (nucleophile) is an active-site residue. A disulfide bridge connects residues Cys59 and Cys89. Cys76, Cys78, and Cys87 together coordinate [4Fe-4S] cluster.

The protein belongs to the ferredoxin thioredoxin reductase beta subunit family. As to quaternary structure, heterodimer of subunit A (variable subunit) and subunit B (catalytic subunit). Heterodimeric FTR forms a complex with ferredoxin and thioredoxin. Requires [4Fe-4S] cluster as cofactor.

The protein localises to the plastid. Its subcellular location is the chloroplast. It carries out the reaction [thioredoxin]-disulfide + 2 reduced [2Fe-2S]-[ferredoxin] + 2 H(+) = [thioredoxin]-dithiol + 2 oxidized [2Fe-2S]-[ferredoxin]. In terms of biological role, catalytic subunit of the ferredoxin-thioredoxin reductase (FTR), which catalyzes the two-electron reduction of thioredoxins by the electrons provided by reduced ferredoxin. This Pyropia yezoensis (Susabi-nori) protein is Ferredoxin-thioredoxin reductase, catalytic chain (ftrB).